Reading from the N-terminus, the 1683-residue chain is Phospholipase D1 (1683 aa).

4 disordered regions span residues 1 to 150 (MSNV…AYTQ), 173 to 198 (LKSSVNSPTPAGSGHRHNQHQHQQVN), 259 to 289 (ILDITNSNHNHRGNNNNNTGENSDRRPSIPR), and 384 to 416 (VMEKKAENKPSSAASAPHTSENNNNDNGSNITS). Residue Ser-2 is modified to N-acetylserine. Phosphoserine is present on residues Ser-8 and Ser-30. Basic and acidic residues-rich tracts occupy residues 20 to 34 (SVTEEVDRVNSRPDE), 63 to 82 (NGKEAERKHALPKSFVDRNL), and 90 to 112 (SLDHIMHSNEHDPRRGSDEENMH). The segment covering 116–125 (NNLHSSNNNV) has biased composition (low complexity). The segment covering 141 to 150 (RRSSSVAYTQ) has biased composition (polar residues). Ser-145 carries the phosphoserine modification. Residues 263 to 279 (TNSNHNHRGNNNNNTGE) are compositionally biased toward low complexity. A PX domain is found at 291-487 (SSIISISSNV…EFYELSPLGN (197 aa)). The span at 392-404 (KPSSAASAPHTSE) shows a compositional bias: polar residues. Low complexity predominate over residues 405–416 (NNNNDNGSNITS). Positions 496-664 (QGKQGYLVIR…SSIIKMSTST (169 aa)) constitute a PH domain. PLD phosphodiesterase domains are found at residues 791–818 (YFWAHHEKFVVIDETFAFIGGTDLCYGR) and 1091–1118 (EQLYVHAKILIADDRRCIIGSANINERS). Active-site residues include His-796, Lys-798, Asp-803, His-1096, Lys-1098, and Asp-1103. Residues 1430-1465 (KDMRRHLSSSTESTRNGSNSLPLNEKSNEGESTNVD) form a disordered region. The span at 1437–1451 (SSSTESTRNGSNSLP) shows a compositional bias: polar residues. The residue at position 1461 (Ser-1461) is a Phosphoserine. Thr-1462 is modified (phosphothreonine).

This sequence belongs to the phospholipase D family. In terms of assembly, interacts with SRF1.

It carries out the reaction a 1,2-diacyl-sn-glycero-3-phosphocholine + H2O = a 1,2-diacyl-sn-glycero-3-phosphate + choline + H(+). With respect to regulation, activity is dependent of phosphatidylinositol 4,5-bisphosphate and the regulator SRF1. Inhibited by magnesium. In terms of biological role, required for meiosis and spore formation. Seems to be involved in the coordinate induction of late meiotic events. PLD activity is induced under sporulation conditions and seems to be necessary to complete the meiotic cycle, but not for vegetative cell growth. This is Phospholipase D1 (SPO14) from Saccharomyces cerevisiae (strain ATCC 204508 / S288c) (Baker's yeast).